We begin with the raw amino-acid sequence, 360 residues long: Methylthioribose-1-phosphate isomerase (360 aa).

The active-site Proton donor is aspartate 246.

This sequence belongs to the eIF-2B alpha/beta/delta subunits family. MtnA subfamily.

It localises to the cytoplasm. It is found in the nucleus. The catalysed reaction is 5-(methylsulfanyl)-alpha-D-ribose 1-phosphate = 5-(methylsulfanyl)-D-ribulose 1-phosphate. It participates in amino-acid biosynthesis; L-methionine biosynthesis via salvage pathway; L-methionine from S-methyl-5-thio-alpha-D-ribose 1-phosphate: step 1/6. Catalyzes the interconversion of methylthioribose-1-phosphate (MTR-1-P) into methylthioribulose-1-phosphate (MTRu-1-P). The sequence is that of Methylthioribose-1-phosphate isomerase from Aedes aegypti (Yellowfever mosquito).